A 412-amino-acid chain; its full sequence is Phosphoribosylamine--glycine ligase (412 aa).

Residues 108–309 (KSIMKKYGVP…LAQAIIDILA (202 aa)) enclose the ATP-grasp domain. 134 to 190 (LDEKGVPLVIKADGLAAGKGVTVAFDIETAKSALADIFSGSQGKVVIEEFLDGEEFS) is a binding site for ATP. Positions 279 and 281 each coordinate Mg(2+).

Belongs to the GARS family. Mg(2+) serves as cofactor. Mn(2+) is required as a cofactor.

It catalyses the reaction 5-phospho-beta-D-ribosylamine + glycine + ATP = N(1)-(5-phospho-beta-D-ribosyl)glycinamide + ADP + phosphate + H(+). It participates in purine metabolism; IMP biosynthesis via de novo pathway; N(1)-(5-phospho-D-ribosyl)glycinamide from 5-phospho-alpha-D-ribose 1-diphosphate: step 2/2. The sequence is that of Phosphoribosylamine--glycine ligase from Lactococcus lactis subsp. lactis (strain IL1403) (Streptococcus lactis).